A 449-amino-acid polypeptide reads, in one-letter code: COP9 signalosome complex subunit 2 (449 aa).

A disordered region spans residues 1–32; that stretch reads MSDDEDMMYDDDEYFDDDEDQDQNDSESEGVE. The PCI domain occupies 251-420; the sequence is AEKEWEKAHT…QQLELDTAKS (170 aa).

Belongs to the CSN2 family. Component of the CSN complex. The holocomplex is comprised of 8 subunits csn1-8. In the complex, it probably interacts directly with csn1, csn3, csn5, csn6, csn7 and csn8.

It is found in the cytoplasm. The protein localises to the nucleus. Functionally, essential component of the COP9 signalosome complex (CSN), a complex involved in various cellular and developmental processes. The CSN complex is an essential regulator of the ubiquitin (Ubl) conjugation pathway by mediating the deneddylation of the cullin subunits of E3 ligase complexes, leading to modify the Ubl ligase activity. In Dictyostelium discoideum (Social amoeba), this protein is COP9 signalosome complex subunit 2 (csn2).